Reading from the N-terminus, the 934-residue chain is Serine/threonine-protein kinase KIPK1 (934 aa).

Disordered stretches follow at residues 20–40, 70–113, 189–227, 305–343, 395–438, and 466–493; these read LPKH…KDLV, RLMS…RFVG, PLMP…FGLQ, SSSA…RPKQ, SIDD…SCNV, and EKET…DYSR. 2 stretches are compositionally biased toward polar residues: residues 82-94 and 212-227; these read SASA…TSPS and NPIS…FGLQ. The span at 395-421 shows a compositional bias: polar residues; sequence SIDDNPPSYTSSHNPKICTDSLSSVSN. One can recognise a Protein kinase domain in the interval 538 to 879; it reads FNLLKKLGCG…SVEIKRHPFF (342 aa). Residues 544–552 and K567 each bind ATP; that span reads LGCGDIGTV. The Proton acceptor role is filled by D663. A disordered region spans residues 738-773; sequence SSNQQQGRKPKRGDHLSKTQQHLSRSLPQLVAEPTE. A compositionally biased stretch (polar residues) spans 755-764; that stretch reads KTQQHLSRSL.

It belongs to the protein kinase superfamily. Ser/Thr protein kinase family. Interacts with KCBP. Interacts with PERK8, PERK9, PERK10 and PERK13. Autophosphorylated. In terms of tissue distribution, expressed in roots, cauline leaves, flowers and siliques.

It is found in the cytoplasm. Its subcellular location is the nucleus. The catalysed reaction is L-seryl-[protein] + ATP = O-phospho-L-seryl-[protein] + ADP + H(+). The enzyme catalyses L-threonyl-[protein] + ATP = O-phospho-L-threonyl-[protein] + ADP + H(+). Could be involved in the negative regulation of root growth. The polypeptide is Serine/threonine-protein kinase KIPK1 (Arabidopsis thaliana (Mouse-ear cress)).